Consider the following 213-residue polypeptide: Superoxide dismutase [Fe] (213 aa).

Positions 28, 82, 164, and 168 each coordinate Fe cation.

It belongs to the iron/manganese superoxide dismutase family. As to quaternary structure, homotetramer. Fe cation is required as a cofactor.

The enzyme catalyses 2 superoxide + 2 H(+) = H2O2 + O2. Its function is as follows. Destroys superoxide anion radicals which are normally produced within the cells and which are toxic to biological systems. In Aquifex aeolicus (strain VF5), this protein is Superoxide dismutase [Fe] (sodB).